We begin with the raw amino-acid sequence, 322 residues long: Ferredoxin--NADP reductase (322 aa).

Residues Asp-34, Gln-42, Tyr-47, Val-87, Phe-120, Asp-279, and Thr-320 each coordinate FAD.

The protein belongs to the ferredoxin--NADP reductase type 2 family. Homodimer. FAD is required as a cofactor.

It catalyses the reaction 2 reduced [2Fe-2S]-[ferredoxin] + NADP(+) + H(+) = 2 oxidized [2Fe-2S]-[ferredoxin] + NADPH. The chain is Ferredoxin--NADP reductase from Streptococcus pneumoniae (strain Hungary19A-6).